The following is a 461-amino-acid chain: UPF0053 protein YhdT (461 aa).

One can recognise a CNNM transmembrane domain in the interval 1–202 (MDDIDSLILI…LKNGEINPSE (202 aa)). The next 3 helical transmembrane spans lie at 8 to 28 (ILIG…FAIV), 103 to 123 (VSFA…GELA), and 137 to 157 (LLIA…IWIL). CBS domains are found at residues 221–280 (MIPR…MTEE) and 290–347 (YVRP…IRDE).

Belongs to the UPF0053 family.

It localises to the cell membrane. This is UPF0053 protein YhdT (yhdT) from Bacillus subtilis (strain 168).